Here is a 400-residue protein sequence, read N- to C-terminus: Na(+)/H(+) antiporter NhaA (400 aa).

Transmembrane regions (helical) follow at residues 26–46, 71–91, 107–127, 137–157, 166–186, 189–209, 212–232, 233–253, 273–293, 299–319, 340–360, and 373–393; these read AGGI…NSPL, LIHW…GMEV, IFPA…YWFI, GWAI…ALLS, IFLL…IALF, HGLS…LILL, FKVS…ASVL, KSGV…PLKG, FVIL…GIDV, PLLL…IFGF, IFAV…LASL, and LSRL…YLFL.

This sequence belongs to the NhaA Na(+)/H(+) (TC 2.A.33) antiporter family.

It localises to the cell inner membrane. It catalyses the reaction Na(+)(in) + 2 H(+)(out) = Na(+)(out) + 2 H(+)(in). Na(+)/H(+) antiporter that extrudes sodium in exchange for external protons. The chain is Na(+)/H(+) antiporter NhaA from Haemophilus influenzae (strain PittEE).